The chain runs to 464 residues: Delta(5) fatty acid desaturase A (464 aa).

Residues 13–90 (GKQYSWSELA…LKNYEIGYIS (78 aa)) form the Cytochrome b5 heme-binding domain. Residues H48 and H71 each contribute to the heme site. A run of 2 helical transmembrane segments spans residues 125-145 (AVSI…TYYL) and 153-173 (FYLN…FSMH). The short motif at 176–180 (HDSCH) is the Histidine box-1 element. Residues 212–217 (HVIGHH) carry the Histidine box-2 motif. A helical transmembrane segment spans residues 318–338 (FTDLICYFLIAEFVFGWYLTI). Residues 396–400 (QVVHH) carry the Histidine box-3 motif.

It belongs to the fatty acid desaturase type 1 family. Requires Fe cation as cofactor.

Its subcellular location is the membrane. Specific for desaturation of the 5 position in C16 and C18 fatty acids. The chain is Delta(5) fatty acid desaturase A (fadA) from Dictyostelium discoideum (Social amoeba).